Here is a 361-residue protein sequence, read N- to C-terminus: tRNA-specific 2-thiouridylase MnmA (361 aa).

ATP contacts are provided by residues 6 to 13 (LVSGGVDS) and I32. An interaction with target base in tRNA region spans residues 93 to 95 (NPD). The Nucleophile role is filled by C98. C98 and C193 are disulfide-bonded. G121 is an ATP binding site. The interaction with tRNA stretch occupies residues 143–145 (KDQ). C193 acts as the Cysteine persulfide intermediate in catalysis.

The protein belongs to the MnmA/TRMU family.

Its subcellular location is the cytoplasm. It carries out the reaction S-sulfanyl-L-cysteinyl-[protein] + uridine(34) in tRNA + AH2 + ATP = 2-thiouridine(34) in tRNA + L-cysteinyl-[protein] + A + AMP + diphosphate + H(+). Catalyzes the 2-thiolation of uridine at the wobble position (U34) of tRNA, leading to the formation of s(2)U34. This Porphyromonas gingivalis (strain ATCC 33277 / DSM 20709 / CIP 103683 / JCM 12257 / NCTC 11834 / 2561) protein is tRNA-specific 2-thiouridylase MnmA.